We begin with the raw amino-acid sequence, 590 residues long: Glypican-3 (590 aa).

Positions M1–S25 are cleaved as a signal peptide. Cystine bridges form between C30-C67, C60-C255, C68-C258, C190-C342, C245-C278, C267-C418, and C271-C406. 2 N-linked (GlcNAc...) asparagine glycosylation sites follow: N119 and N234. Residue N414 is glycosylated (N-linked (GlcNAc...) asparagine). Disordered regions lie at residues P429–P450 and W476–G520. Over residues T495 to C513 the composition is skewed to acidic residues. 2 O-linked (Xyl...) (glycosaminoglycan) serine glycosylation sites follow: S504 and S517.

This sequence belongs to the glypican family. In terms of assembly, heterodimer; disulfide-linked. Cleavage by a furin-like convertase results in production of alpha and beta chains which form a disulfide-linked heterodimer. In terms of processing, O-glycosylated; contains heparan sulfate and/or chondroitin sulfate. Post-translationally, cleaved intracellularly by a furin-like convertase to generate 2 subunits, alpha and beta, which remain associated through disulfide bonds and are associated with the cell surface via the GPI-anchor. This processing is essential for its role in inhibition of hedgehog signaling. A second proteolytic event may result in cleavage of the protein on the cell surface, separating it from the GPI-anchor and leading to its shedding from the cell surface. In terms of tissue distribution, maternally expressed and is almost ubiquitous during blastula and gastrula stages but becomes restricted to the prospective hindbrain by 24 hours post-fertilization.

Its subcellular location is the cell membrane. Its function is as follows. Cell surface proteoglycan. Negatively regulates the hedgehog signaling pathway. Positively regulates the canonical and non-canonical Wnt signaling pathways. Binds to CD81 which decreases the availability of free CD81 for binding to the transcriptional repressor HHEX, resulting in nuclear translocation of HHEX and transcriptional repression. Inhibits the dipeptidyl peptidase activity of DPP4. Plays a role in limb patterning and skeletal development. Modulates the effects of growth factors on renal branching morphogenesis. Required for coronary vascular development. Plays a role in regulating cell movements during gastrulation. The polypeptide is Glypican-3 (Danio rerio (Zebrafish)).